Consider the following 470-residue polypeptide: Ubiquitin carboxyl-terminal hydrolase calypso (470 aa).

One can recognise a UCH catalytic domain in the interval 43-274; sequence GWLELESDPG…IRFNLMAVVP (232 aa). C129 acts as the Nucleophile in catalysis. H211 serves as the catalytic Proton donor. Residues 305–324 form a disordered region; the sequence is DEQGEGGNGDPQRPDTPSTL. The region spanning 373–401 is the ULD domain; sequence NYDKFICTFLSMLAHQGVLGELVSQHLLP. The positively charged C-terminal tail required for binding nucleosomes stretch occupies residues 403–470; sequence KKISGQSAAN…KGRNKCKKRK (68 aa). The span at 422–451 shows a compositional bias: low complexity; that stretch reads ANAGATAAGAAGAAPKSQQQQAAAAKNGKS. A disordered region spans residues 422 to 470; sequence ANAGATAAGAAGAAPKSQQQQAAAAKNGKSPSKTPGRRRKGRNKCKKRK. Positions 456–470 are enriched in basic residues; it reads PGRRRKGRNKCKKRK.

Belongs to the peptidase C12 family. BAP1 subfamily. As to quaternary structure, catalytic component of the polycomb repressive deubiquitinase (PR-DUB) complex, at least composed of caly/calypso, Asx and sba (MBD5/6 homolog). The PR-DUB complex associates with nucleosomes to mediate deubiquitination of histone H2AK118ub1 substrates; the association requires the positively charged C-terminal tail of caly, probably due to direct binding of DNA. Interacts (via ULD domain) with Asx (via DEUBAD domain); the interaction produces a stable heterodimer with a composite binding site for ubiquitin. Homodimerizes (via coiled-coil hinge-region between the UCH and ULD domains) to mediate assembly of 2 copies of the caly-Asx heterodimer into a bisymmetric tetramer; dimerization enhances PR-DUB association with nucleosomes.

Its subcellular location is the nucleus. It carries out the reaction Thiol-dependent hydrolysis of ester, thioester, amide, peptide and isopeptide bonds formed by the C-terminal Gly of ubiquitin (a 76-residue protein attached to proteins as an intracellular targeting signal).. Its function is as follows. Catalytic component of the polycomb repressive deubiquitinase (PR-DUB) complex, a complex that specifically mediates deubiquitination of histone H2A monoubiquitinated at 'Lys-119' (H2AK118ub1). Mediates bisymmetric organization of the PR-DUB complex and is involved in association with nucleosomes to mediate deubiquitination. Does not deubiquitinate monoubiquitinated histone H2B. Required to maintain the transcriptionally repressive state of homeotic genes throughout development. The PR-DUB complex has weak or no activity toward 'Lys-48'- and 'Lys-63'-linked polyubiquitin chains. Polycomb group (PcG) protein. The polypeptide is Ubiquitin carboxyl-terminal hydrolase calypso (Drosophila ananassae (Fruit fly)).